Reading from the N-terminus, the 493-residue chain is Galactose-1-phosphate uridylyltransferase 2 (493 aa).

The protein belongs to the galactose-1-phosphate uridylyltransferase type 2 family.

The protein localises to the cytoplasm. The enzyme catalyses alpha-D-galactose 1-phosphate + UDP-alpha-D-glucose = alpha-D-glucose 1-phosphate + UDP-alpha-D-galactose. The protein operates within carbohydrate metabolism; galactose metabolism. The polypeptide is Galactose-1-phosphate uridylyltransferase 2 (galT2) (Streptococcus pneumoniae serotype 4 (strain ATCC BAA-334 / TIGR4)).